Consider the following 293-residue polypeptide: Rhomboid-like protease 1 (293 aa).

Residues 18 to 40 are disordered; the sequence is EHTPLYNAETGSRDSDSTSSGGA. The next 6 membrane-spanning stretches (helical) occupy residues 62-82, 112-132, 148-168, 174-194, 217-237, and 262-282; these read VVLA…CLDT, LLLP…VFFQ, FTGL…TAFF, VGAS…MALT, LLMF…GGLL, and AAAI…LYAV. The Nucleophile role is filled by Ser-177. His-232 is an active-site residue.

Belongs to the peptidase S54 family.

The protein resides in the cytoplasmic vesicle. Its subcellular location is the secretory vesicle. It is found in the microneme membrane. The enzyme catalyses Cleaves type-1 transmembrane domains using a catalytic dyad composed of serine and histidine that are contributed by different transmembrane domains.. Functionally, serine protease involved in intramembrane proteolysis and the subsequent release of polypeptides from their membrane anchors. Has no detectable activity towards MIC2. In Toxoplasma gondii, this protein is Rhomboid-like protease 1 (ROM1).